The primary structure comprises 305 residues: Methionyl-tRNA formyltransferase (305 aa).

A (6S)-5,6,7,8-tetrahydrofolate-binding site is contributed by Ser110–Pro113.

It belongs to the Fmt family.

It catalyses the reaction L-methionyl-tRNA(fMet) + (6R)-10-formyltetrahydrofolate = N-formyl-L-methionyl-tRNA(fMet) + (6S)-5,6,7,8-tetrahydrofolate + H(+). In terms of biological role, attaches a formyl group to the free amino group of methionyl-tRNA(fMet). The formyl group appears to play a dual role in the initiator identity of N-formylmethionyl-tRNA by promoting its recognition by IF2 and preventing the misappropriation of this tRNA by the elongation apparatus. In Gluconacetobacter diazotrophicus (strain ATCC 49037 / DSM 5601 / CCUG 37298 / CIP 103539 / LMG 7603 / PAl5), this protein is Methionyl-tRNA formyltransferase.